Here is a 550-residue protein sequence, read N- to C-terminus: MDLASLPPALKPIIPYLKQSQQLEKHDLLMAYYCRVHAIQMAMDIKQKMGASGSFLSIPIVKILDQGDADKAKLGSRLDEEDEAKYVEAFAMKAFSFADTQDRAGKANKATSTTFYSAFLFFNVLEHMGEVSEEVKLKKKYASWRSVDINTAIKNGVAPSPPPSIDQNEEGGASGETEEDAQLKQLEMELNLAKATLQQDNNNNNNMSSSTIITTNSVSEGMSSSLSFPSFPSIPNNNNNNNNTTPSFPSFPSFPSPTNSDNNSNNNKPAFPSFPSFPSPPTTTNSDSAPSFPKFPSTPSPTNSSSNNSQQPSFPSFPSFTSPTNSNNNNNNSQQPSFPTFPNSTNQKRQVFESDEEEEQEEVEDYSEKQQQKSTSSSFPKFPSNSHNNEYNQPPPPAYEFKQSPPQQHKQSPPQQHHNSHDNEALIKYQQQVAQQNLTIQKQKHQNQMLQDEVEQKQQQIQLQQQQLQQQQQQIQLLQKQIQQQQKQLMSGGGGGGNMSMNLNHTPSDTDKASAEKYSKWVISSLQFDDVPSAVKNAKLSLKYLTGEDS.

Disordered regions lie at residues 153–179 (IKNG…ETEE), 220–460 (EGMS…KQQQ), and 488–512 (QLMS…DTDK). 2 stretches are compositionally biased toward low complexity: residues 220 to 274 (EGMS…FPSF) and 282 to 338 (TTTN…QPSF). Residues 340–349 (TFPNSTNQKR) are compositionally biased toward polar residues. Residues 353-365 (ESDEEEEQEEVED) show a composition bias toward acidic residues. Composition is skewed to low complexity over residues 372 to 389 (QKST…SHNN) and 402 to 417 (KQSP…PQQH). Residues 429–450 (YQQQVAQQNLTIQKQKHQNQML) show a composition bias toward polar residues.

The protein belongs to the VTA1 family.

The protein resides in the cytoplasm. It localises to the endosome membrane. Involved in the endosomal multivesicular bodies (MVB) pathway. MVBs contain intraluminal vesicles (ILVs) that are generated by invagination and scission from the limiting membrane of the endosome and are delivered to lysosomes enabling degradation of membrane proteins. Thought to be a cofactor of VPS4, which catalyzes the disassembly of membrane-associated ESCRT-III. The protein is Vacuolar protein sorting-associated protein VTA1 homolog (vta1) of Dictyostelium discoideum (Social amoeba).